We begin with the raw amino-acid sequence, 683 residues long: Transforming growth factor-beta-induced protein ig-h3 (683 aa).

The N-terminal stretch at 1-23 (MALLGRLLPLALALALGPAATPA) is a signal peptide. Position 37 is a phosphoserine (S37). The EMI domain occupies 45 to 99 (GPNVCAVQKLIGTNKKYFTNCKQWYQRKICGKSTVISYECCPGYEKVPGEKGCPA). 5 disulfides stabilise this stretch: C49–C85, C74–C339, C84–C97, C214–C317, and C473–C478. Residue C65 is modified to S-cysteinyl cysteine. 4 consecutive FAS1 domains span residues 103–236 (LSNL…DKVI), 240–371 (TNNI…DELL), 375–498 (SAKT…DRML), and 502–632 (MGTV…SSVL). Positions 642–644 (RGD) match the Cell attachment site motif.

Binds to type I, II, and IV collagens. In terms of processing, gamma-carboxylation is controversial. Gamma-carboxyglutamated; gamma-carboxyglutamate residues are formed by vitamin K dependent carboxylation; this may be required for calcium binding. According to a more recent report, does not contain vitamin K-dependent gamma-carboxyglutamate residues. Post-translationally, the EMI domain contains 2 expected intradomain disulfide bridges (Cys-49-Cys85 and Cys-84-Cys-97) and one unusual interdomain disulfide bridge to the second FAS1 domain (Cys-74-Cys-339). This arrangement violates the predicted disulfide bridge pattern of an EMI domain.

Its subcellular location is the secreted. It is found in the extracellular space. It localises to the extracellular matrix. Functionally, plays a role in cell adhesion. May play a role in cell-collagen interactions. In Bos taurus (Bovine), this protein is Transforming growth factor-beta-induced protein ig-h3 (TGFBI).